We begin with the raw amino-acid sequence, 107 residues long: Nucleoid-associated protein AZOSEA06390 (107 aa).

This sequence belongs to the YbaB/EbfC family. As to quaternary structure, homodimer.

The protein resides in the cytoplasm. It is found in the nucleoid. Binds to DNA and alters its conformation. May be involved in regulation of gene expression, nucleoid organization and DNA protection. In Aromatoleum aromaticum (strain DSM 19018 / LMG 30748 / EbN1) (Azoarcus sp. (strain EbN1)), this protein is Nucleoid-associated protein AZOSEA06390.